Reading from the N-terminus, the 151-residue chain is Small ribosomal subunit protein uS15 (151 aa).

Belongs to the universal ribosomal protein uS15 family.

In Pisum sativum (Garden pea), this protein is Small ribosomal subunit protein uS15 (RPS13).